The sequence spans 216 residues: Phosphatidylserine decarboxylase proenzyme (216 aa).

Ser-183 acts as the Schiff-base intermediate with substrate; via pyruvic acid in catalysis. Pyruvic acid (Ser); by autocatalysis is present on Ser-183.

The protein belongs to the phosphatidylserine decarboxylase family. PSD-A subfamily. In terms of assembly, heterodimer of a large membrane-associated beta subunit and a small pyruvoyl-containing alpha subunit. It depends on pyruvate as a cofactor. Post-translationally, is synthesized initially as an inactive proenzyme. Formation of the active enzyme involves a self-maturation process in which the active site pyruvoyl group is generated from an internal serine residue via an autocatalytic post-translational modification. Two non-identical subunits are generated from the proenzyme in this reaction, and the pyruvate is formed at the N-terminus of the alpha chain, which is derived from the carboxyl end of the proenzyme. The post-translation cleavage follows an unusual pathway, termed non-hydrolytic serinolysis, in which the side chain hydroxyl group of the serine supplies its oxygen atom to form the C-terminus of the beta chain, while the remainder of the serine residue undergoes an oxidative deamination to produce ammonia and the pyruvoyl prosthetic group on the alpha chain.

It is found in the cell membrane. It catalyses the reaction a 1,2-diacyl-sn-glycero-3-phospho-L-serine + H(+) = a 1,2-diacyl-sn-glycero-3-phosphoethanolamine + CO2. It participates in phospholipid metabolism; phosphatidylethanolamine biosynthesis; phosphatidylethanolamine from CDP-diacylglycerol: step 2/2. In terms of biological role, catalyzes the formation of phosphatidylethanolamine (PtdEtn) from phosphatidylserine (PtdSer). The sequence is that of Phosphatidylserine decarboxylase proenzyme from Chlorobaculum tepidum (strain ATCC 49652 / DSM 12025 / NBRC 103806 / TLS) (Chlorobium tepidum).